The following is a 250-amino-acid chain: 2,3-bisphosphoglycerate-dependent phosphoglycerate mutase (250 aa).

Substrate is bound by residues 10 to 17 (RHGESQWN), 23 to 24 (TG), arginine 62, 89 to 92 (ERHY), lysine 100, 116 to 117 (RR), and 185 to 186 (GN). The active-site Tele-phosphohistidine intermediate is the histidine 11. Glutamate 89 acts as the Proton donor/acceptor in catalysis.

Belongs to the phosphoglycerate mutase family. BPG-dependent PGAM subfamily. As to quaternary structure, homodimer.

The catalysed reaction is (2R)-2-phosphoglycerate = (2R)-3-phosphoglycerate. Its pathway is carbohydrate degradation; glycolysis; pyruvate from D-glyceraldehyde 3-phosphate: step 3/5. In terms of biological role, catalyzes the interconversion of 2-phosphoglycerate and 3-phosphoglycerate. This is 2,3-bisphosphoglycerate-dependent phosphoglycerate mutase from Sodalis glossinidius (strain morsitans).